The sequence spans 157 residues: UPF0225 protein PMI1492 (157 aa).

Belongs to the UPF0225 family.

This Proteus mirabilis (strain HI4320) protein is UPF0225 protein PMI1492.